The following is a 120-amino-acid chain: Photosystem II extrinsic protein U (120 aa).

Positions 1–29 (MKRLLSLLTGVLVMTGLLMALIFPQSAYA) are cleaved as a signal peptide.

It belongs to the PsbU family. PSII is composed of 1 copy each of membrane proteins PsbA, PsbB, PsbC, PsbD, PsbE, PsbF, PsbH, PsbI, PsbJ, PsbK, PsbL, PsbM, PsbT, PsbX, PsbY, Psb30/Ycf12, peripheral proteins PsbO, CyanoQ (PsbQ), PsbU, PsbV and a large number of cofactors. It forms dimeric complexes.

The protein localises to the cellular thylakoid membrane. Its function is as follows. One of the extrinsic, lumenal subunits of photosystem II (PSII). PSII is a light-driven water plastoquinone oxidoreductase, using light energy to abstract electrons from H(2)O, generating a proton gradient subsequently used for ATP formation. The extrinsic proteins stabilize the structure of photosystem II oxygen-evolving complex (OEC), the ion environment of oxygen evolution and protect the OEC against heat-induced inactivation. In Prochlorococcus marinus (strain MIT 9303), this protein is Photosystem II extrinsic protein U.